The primary structure comprises 159 residues: Ribosomal RNA large subunit methyltransferase H (159 aa).

S-adenosyl-L-methionine-binding positions include Leu-76, Gly-108, and 127 to 132 (FSKMTF).

It belongs to the RNA methyltransferase RlmH family. As to quaternary structure, homodimer.

It is found in the cytoplasm. It catalyses the reaction pseudouridine(1915) in 23S rRNA + S-adenosyl-L-methionine = N(3)-methylpseudouridine(1915) in 23S rRNA + S-adenosyl-L-homocysteine + H(+). Functionally, specifically methylates the pseudouridine at position 1915 (m3Psi1915) in 23S rRNA. The sequence is that of Ribosomal RNA large subunit methyltransferase H from Halalkalibacterium halodurans (strain ATCC BAA-125 / DSM 18197 / FERM 7344 / JCM 9153 / C-125) (Bacillus halodurans).